A 907-amino-acid polypeptide reads, in one-letter code: Translation initiation factor IF-2 (907 aa).

3 stretches are compositionally biased toward basic and acidic residues: residues 223–235, 251–263, and 270–281; these read LAQR…KRAA, VAKE…EKNA, and GGKDWNDSDGKK. Residues 223-320 form a disordered region; the sequence is LAQRRQEEAK…ENQQHAFTAP (98 aa). Positions 407 to 576 constitute a tr-type G domain; sequence PRPPVVTVMG…LLQAEVLELK (170 aa). The tract at residues 416–423 is G1; that stretch reads GHVDHGKT. 416 to 423 lines the GTP pocket; that stretch reads GHVDHGKT. The G2 stretch occupies residues 441-445; the sequence is GITQH. The interval 462–465 is G3; the sequence is DTPG. Residues 462-466 and 516-519 each bind GTP; these read DTPGH and NKID. Positions 516–519 are G4; that stretch reads NKID. A G5 region spans residues 552–554; it reads SAK.

It belongs to the TRAFAC class translation factor GTPase superfamily. Classic translation factor GTPase family. IF-2 subfamily.

The protein localises to the cytoplasm. One of the essential components for the initiation of protein synthesis. Protects formylmethionyl-tRNA from spontaneous hydrolysis and promotes its binding to the 30S ribosomal subunits. Also involved in the hydrolysis of GTP during the formation of the 70S ribosomal complex. This chain is Translation initiation factor IF-2, found in Methylobacillus flagellatus (strain ATCC 51484 / DSM 6875 / VKM B-1610 / KT).